A 126-amino-acid polypeptide reads, in one-letter code: Phosphoribosyl-AMP cyclohydrolase (126 aa).

Aspartate 77 contacts Mg(2+). Cysteine 78 lines the Zn(2+) pocket. Positions 79 and 81 each coordinate Mg(2+). Zn(2+) is bound by residues cysteine 95 and cysteine 102.

Belongs to the PRA-CH family. In terms of assembly, homodimer. It depends on Mg(2+) as a cofactor. Zn(2+) serves as cofactor.

The protein resides in the cytoplasm. It carries out the reaction 1-(5-phospho-beta-D-ribosyl)-5'-AMP + H2O = 1-(5-phospho-beta-D-ribosyl)-5-[(5-phospho-beta-D-ribosylamino)methylideneamino]imidazole-4-carboxamide. The protein operates within amino-acid biosynthesis; L-histidine biosynthesis; L-histidine from 5-phospho-alpha-D-ribose 1-diphosphate: step 3/9. In terms of biological role, catalyzes the hydrolysis of the adenine ring of phosphoribosyl-AMP. The polypeptide is Phosphoribosyl-AMP cyclohydrolase (Cellvibrio japonicus (strain Ueda107) (Pseudomonas fluorescens subsp. cellulosa)).